A 350-amino-acid polypeptide reads, in one-letter code: Gene 40 protein (350 aa).

237 to 244 is an ATP binding site; sequence AVKESGKT.

This Bacillus phage SP01 (Bacteriophage SP01) protein is Gene 40 protein (40).